Reading from the N-terminus, the 111-residue chain is MIMTTTETIAGKQITEVKGLVTSSIVQSRHIGKDLLAGLKSVVGGELKSYTEMLEDSKKAVKERLIREAEQLGANAIVGLRFELTAGQNTSELIGYGTAVTAESIKKNKPL.

This sequence belongs to the UPF0145 family.

This Bacillus velezensis (strain DSM 23117 / BGSC 10A6 / LMG 26770 / FZB42) (Bacillus amyloliquefaciens subsp. plantarum) protein is UPF0145 protein RBAM_010660.